A 228-amino-acid chain; its full sequence is GDT1-like protein 5 (228 aa).

The residue at position 2 (glycine 2) is an N-acetylglycine. The next 6 helical transmembrane spans lie at 12-32 (LAMT…AILA), 39-59 (LVLA…ATLG), 71-91 (THHI…WDGF), 133-153 (PFLT…NFFG), 173-193 (LGVV…AVLG), and 205-225 (IVAL…LLTP).

Belongs to the GDT1 family.

It is found in the membrane. The polypeptide is GDT1-like protein 5 (Arabidopsis thaliana (Mouse-ear cress)).